The primary structure comprises 196 residues: Guanylate kinase (196 aa).

One can recognise a Guanylate kinase-like domain in the interval 8–189 (GKIIIISGPS…AADKLRHILY (182 aa)). Residue 15–22 (GPSGVGKK) coordinates ATP.

The protein belongs to the guanylate kinase family.

The protein resides in the cytoplasm. The catalysed reaction is GMP + ATP = GDP + ADP. Its function is as follows. Essential for recycling GMP and indirectly, cGMP. The protein is Guanylate kinase of Malacoplasma penetrans (strain HF-2) (Mycoplasma penetrans).